We begin with the raw amino-acid sequence, 1112 residues long: Mediator of RNA polymerase II transcription subunit 14 (1112 aa).

The protein belongs to the Mediator complex subunit 14 family. In terms of assembly, component of the Mediator complex.

It is found in the nucleus. Functionally, component of the Mediator complex, a coactivator involved in the regulated transcription of nearly all RNA polymerase II-dependent genes. Mediator functions as a bridge to convey information from gene-specific regulatory proteins to the basal RNA polymerase II transcription machinery. Mediator is recruited to promoters by direct interactions with regulatory proteins and serves as a scaffold for the assembly of a functional preinitiation complex with RNA polymerase II and the general transcription factors. The chain is Mediator of RNA polymerase II transcription subunit 14 (RGR1) from Scheffersomyces stipitis (strain ATCC 58785 / CBS 6054 / NBRC 10063 / NRRL Y-11545) (Yeast).